Here is a 182-residue protein sequence, read N- to C-terminus: Translation initiation factor IF-3 (182 aa).

Belongs to the IF-3 family. Monomer.

The protein resides in the cytoplasm. In terms of biological role, IF-3 binds to the 30S ribosomal subunit and shifts the equilibrium between 70S ribosomes and their 50S and 30S subunits in favor of the free subunits, thus enhancing the availability of 30S subunits on which protein synthesis initiation begins. This Endomicrobium trichonymphae protein is Translation initiation factor IF-3.